The sequence spans 744 residues: Protein zyg-11 homolog B (744 aa).

LRR repeat units lie at residues 185–208 (LPRL…LACK), 216–236 (MHHL…VREL), and 237–261 (KHLN…LLEQ).

The protein belongs to the zyg-11 family. (Microbial infection) Interacts with SARS-COV-2 protein ORF10. In terms of assembly, interacts with ELOC/Elongin C. Part of an E3 ubiquitin ligase complex including ZYG11B, CUL2 and Elongin BC. Post-translationally, (Microbial infection) Ubiquitinated; leading to proteasomal degradation in the presence of herpes simplex virus 1/HHV-1.

The protein resides in the cytoplasm. Functionally, serves as substrate adapter subunit in the E3 ubiquitin ligase complex ZYG11B-CUL2-Elongin BC. Acts to target substrates bearing N-terminal degrons for proteasomal degradation with the first four residues of substrates being the key recognition elements. Prefers Nt-Gly but also has the capacity to recognize Nt-Ser, -Ala and -Cys. Involved in the clearance of proteolytic fragments generated by caspase cleavage during apoptosis since N-terminal glycine degrons are strongly enriched at caspase cleavage sites. Also important in the quality control of protein N-myristoylation in which N-terminal glycine degrons are conditionally exposed after a failure of N-myristoylation. In addition, plays a role in the amplification of cGAS to enhance innate immune response. Mechanistically, strengthens the processes of cGAS binding with dsDNA and assembling oligomers and also accelerates and stabilizes cGAS-DNA condensation, thereby enhancing production of antiviral IFNs and inflammatory cytokines. This Homo sapiens (Human) protein is Protein zyg-11 homolog B.